We begin with the raw amino-acid sequence, 465 residues long: GDNF family receptor alpha-1 (465 aa).

The N-terminal stretch at methionine 1–glycine 24 is a signal peptide. A run of 3 repeats spans residues aspartate 25–asparagine 113, lysine 150–arginine 238, and glutamate 239–isoleucine 342. The cysteines at positions 36 and 42 are disulfide-linked. Asparagine 59 carries N-linked (GlcNAc...) asparagine glycosylation. 10 disulfides stabilise this stretch: cysteine 154/cysteine 214, cysteine 161/cysteine 167, cysteine 178/cysteine 192, cysteine 187/cysteine 233, cysteine 216/cysteine 221, cysteine 243/cysteine 313, cysteine 250/cysteine 256, cysteine 267/cysteine 285, cysteine 277/cysteine 337, and cysteine 315/cysteine 325. N-linked (GlcNAc...) asparagine glycosylation is found at asparagine 347 and asparagine 406. Serine 429 carries GPI-anchor amidated serine lipidation. Residues histidine 430–serine 465 constitute a propeptide, removed in mature form.

It belongs to the GDNFR family. As to quaternary structure, interacts with GDNF ligand and RET: forms a 2:2:2 ternary complex composed of GDNF ligand, GFRA1 and RET receptor. Interacts with SORL1, either alone or in complex with GDNF. Interaction between SORL1 and GFRA1 leads to GFRA1 internalization, but not degradation.

The protein localises to the cell membrane. Its subcellular location is the golgi apparatus. It is found in the trans-Golgi network. The protein resides in the endosome. It localises to the multivesicular body. Its function is as follows. Coreceptor for GDNF, a neurotrophic factor that enhances survival and morphological differentiation of dopaminergic neurons and increases their high-affinity dopamine uptake. GDNF-binding leads to autophosphorylation and activation of the RET receptor. The polypeptide is GDNF family receptor alpha-1 (GFRA1) (Homo sapiens (Human)).